Consider the following 542-residue polypeptide: Beta-amylase 2, chloroplastic (542 aa).

The N-terminal 55 residues, 1 to 55 (MAIRLNHSVIPVSVKLGAPTRVSARSSLPFSVGDWRGVSTFSGARPLVLAKVKLR), are a transit peptide targeting the chloroplast. The substrate site is built by D136, H176, and D184. Residue E269 is the Proton donor of the active site. K377, H382, and T424 together coordinate substrate. E465 serves as the catalytic Proton acceptor. Residues 466–467 (NA) and R501 contribute to the substrate site.

It belongs to the glycosyl hydrolase 14 family.

It localises to the plastid. The protein resides in the chloroplast. The catalysed reaction is Hydrolysis of (1-&gt;4)-alpha-D-glucosidic linkages in polysaccharides so as to remove successive maltose units from the non-reducing ends of the chains.. Redox regulation; active in reducing conditions, inactive in oxidizing conditions. Low beta-amylase activity. Interacts poorly with starch or other alpha-1,4-glucan. In Arabidopsis thaliana (Mouse-ear cress), this protein is Beta-amylase 2, chloroplastic (BAM2).